Consider the following 175-residue polypeptide: Nucleoplasmin-3 (175 aa).

Position 2 is an N-acetylalanine (Ala-2). Ser-16 carries the phosphoserine modification. Position 27 is an omega-N-methylarginine (Arg-27). Phosphoserine occurs at positions 147 and 151.

This sequence belongs to the nucleoplasmin family. As to quaternary structure, interacts with NPM (via N-terminus). Forms a pentamer with NPM at a ratio 4:1 (NPM3/NPM). Two pentamers form a decamer. In terms of processing, phosphorylated. In terms of tissue distribution, predominantly expressed in testis.

The protein resides in the nucleus. It localises to the nucleolus. Functionally, plays a role in the regulation of diverse cellular processes such as ribosome biogenesis, chromatin remodeling or protein chaperoning. Modulates the histone chaperone function and the RNA-binding activity of nucleolar phosphoprotein B23/NPM. Efficiently mediates chromatin remodeling when included in a pentamer containing NPM3 and NPM. The sequence is that of Nucleoplasmin-3 (Npm3) from Mus musculus (Mouse).